A 439-amino-acid chain; its full sequence is Phosphomethylpyrimidine synthase (439 aa).

Substrate is bound by residues Asn-67, Met-96, Tyr-126, His-165, 187 to 189 (SRG), 228 to 231 (DSLR), and Glu-267. Position 271 (His-271) interacts with Zn(2+). Position 294 (Tyr-294) interacts with substrate. His-335 contacts Zn(2+). [4Fe-4S] cluster-binding residues include Cys-411, Cys-414, and Cys-418.

Belongs to the ThiC family. The cofactor is [4Fe-4S] cluster.

The catalysed reaction is 5-amino-1-(5-phospho-beta-D-ribosyl)imidazole + S-adenosyl-L-methionine = 4-amino-2-methyl-5-(phosphooxymethyl)pyrimidine + CO + 5'-deoxyadenosine + formate + L-methionine + 3 H(+). Its pathway is cofactor biosynthesis; thiamine diphosphate biosynthesis. Functionally, catalyzes the synthesis of the hydroxymethylpyrimidine phosphate (HMP-P) moiety of thiamine from aminoimidazole ribotide (AIR) in a radical S-adenosyl-L-methionine (SAM)-dependent reaction. The polypeptide is Phosphomethylpyrimidine synthase (Ignicoccus hospitalis (strain KIN4/I / DSM 18386 / JCM 14125)).